A 340-amino-acid chain; its full sequence is Protein pelota homolog (340 aa).

This sequence belongs to the eukaryotic release factor 1 family. Pelota subfamily. In terms of assembly, monomer. A divalent metal cation is required as a cofactor.

The protein resides in the cytoplasm. In terms of biological role, may function in recognizing stalled ribosomes, interact with stem-loop structures in stalled mRNA molecules, and effect endonucleolytic cleavage of the mRNA. May play a role in the release non-functional ribosomes and degradation of damaged mRNAs. Has endoribonuclease activity. The polypeptide is Protein pelota homolog (Methanosphaerula palustris (strain ATCC BAA-1556 / DSM 19958 / E1-9c)).